The chain runs to 503 residues: Maturase K (503 aa).

This sequence belongs to the intron maturase 2 family. MatK subfamily.

It localises to the plastid. Its subcellular location is the chloroplast. Usually encoded in the trnK tRNA gene intron. Probably assists in splicing its own and other chloroplast group II introns. The chain is Maturase K from Syzygium anisatum (Aniseed myrtle).